Consider the following 182-residue polypeptide: Guanylate kinase (182 aa).

The 179-residue stretch at 2-180 (GTLTVITGPS…ALLKLEGLMG (179 aa)) folds into the Guanylate kinase-like domain. Residue 9–16 (GPSGVGKG) participates in ATP binding.

The protein belongs to the guanylate kinase family.

The protein resides in the cytoplasm. The enzyme catalyses GMP + ATP = GDP + ADP. It catalyses the reaction dZMP + ATP = dZDP + ADP. It participates in purine metabolism. Its function is as follows. Essential for recycling GMP and indirectly, cGMP. Functionally, (Microbial infection) Catalyzes the phosphorylation of dZMP to dZDP, when the bacterium is infected by a phage that produces the substrate for the synthesis of dZTP (2- amino-2'-deoxyadenosine 5'-triphosphate), which is then used by the phage as a DNA polymerase substrate. In Parasynechococcus marenigrum (strain WH8102), this protein is Guanylate kinase.